The sequence spans 529 residues: Transcription factor BIM1 (529 aa).

Disordered regions lie at residues 1–91, 245–291, 425–450, and 491–529; these read MELP…HVLP, KKES…RRSK, RVASSEAVEPSPSSRSQKEEEDEEVL, and AKQSSSSSFKDHEVREPVSRTRNDNVKQTRKPKRLKTGQ. Positions 76–86 are enriched in pro residues; it reads KPPPPAPPPPL. Basic and acidic residues-rich tracts occupy residues 255 to 265 and 282 to 291; these read HRVDLRVKADV and SATEQRRRSK. Residues 276–326 enclose the bHLH domain; the sequence is TPRSKHSATEQRRRSKINDRFQMLRQLIPNSDQKRDKASFLLEVIEYIQFL. Residues 426–438 show a composition bias toward low complexity; that stretch reads VASSEAVEPSPSS. The span at 499-517 shows a compositional bias: basic and acidic residues; the sequence is FKDHEVREPVSRTRNDNVK. The segment covering 518 to 529 has biased composition (basic residues); the sequence is QTRKPKRLKTGQ.

Homodimer. Interacts with BZR2/BES1 through both C-terminal and bHLH domains. Also interacts with LHW. As to expression, expressed constitutively in roots.

Its subcellular location is the nucleus. Functionally, positive brassinosteroid-signaling protein. Transcription factor that bind specifically to the DNA sequence 5'-CANNTG-3'(E box). Can bind individually to the promoter as a homodimer or synergistically as a heterodimer with BZR2/BES1. Does not itself activate transcription but enhances BZR2/BES1-mediated target gene activation. The sequence is that of Transcription factor BIM1 (BIM1) from Arabidopsis thaliana (Mouse-ear cress).